A 102-amino-acid polypeptide reads, in one-letter code: Beta-defensin 116 (102 aa).

The signal sequence occupies residues 1–23 (MSVMKPCLMTIAILMILAQKTPG). 3 cysteine pairs are disulfide-bonded: C40/C67, C47/C61, and C51/C68. Residues 83-102 (EDYDSNSNLSVTNSSSYSHI) form a disordered region. Positions 87–102 (SNSNLSVTNSSSYSHI) are enriched in low complexity.

It belongs to the beta-defensin family.

Its subcellular location is the secreted. In terms of biological role, has antibacterial activity. The polypeptide is Beta-defensin 116 (DEFB116) (Homo sapiens (Human)).